Consider the following 213-residue polypeptide: Agglutinin isolectin 2 (213 aa).

The N-terminal stretch at Met1–Ala27 is a signal peptide. A Pyrrolidone carboxylic acid modification is found at Gln28. Chitin-binding type-1 domains lie at Gln28 to Thr69, Ser70 to Ala112, Asp113 to Thr155, and Asp156 to Ala198. Cystine bridges form between Cys30–Cys45, Cys39–Cys51, Cys44–Cys58, Cys62–Cys67, Cys73–Cys88, Cys82–Cys94, Cys87–Cys101, Cys105–Cys110, Cys116–Cys131, Cys125–Cys137, Cys130–Cys144, Cys148–Cys153, Cys159–Cys174, Cys168–Cys180, Cys173–Cys187, and Cys191–Cys196. Met37–Cys39 provides a ligand contact to substrate. Residue Ser89 to Tyr100 participates in substrate binding. Ser141 to Glu142 is a binding site for substrate. The propeptide occupies Val199–Glu213.

Homodimer, u-shaped.

In terms of biological role, N-acetyl-D-glucosamine / N-acetyl-D-neuraminic acid binding lectin. The polypeptide is Agglutinin isolectin 2 (Triticum aestivum (Wheat)).